Reading from the N-terminus, the 902-residue chain is HTH-type transcriptional regulator MalT (902 aa).

39–46 (SPAGYGKT) serves as a coordination point for ATP. The HTH luxR-type domain occupies 832-897 (ELVRTSPLTQ…EAIVTAENLL (66 aa)). A DNA-binding region (H-T-H motif) is located at residues 856–875 (NEQIAQELDVAGTTIKTHIR).

The protein belongs to the MalT family. Monomer in solution. Oligomerizes to an active state in the presence of the positive effectors ATP and maltotriose.

With respect to regulation, activated by ATP and maltotriose, which are both required for DNA binding. In terms of biological role, positively regulates the transcription of the maltose regulon whose gene products are responsible for uptake and catabolism of malto-oligosaccharides. Specifically binds to the promoter region of its target genes, recognizing a short DNA motif called the MalT box. This chain is HTH-type transcriptional regulator MalT, found in Vibrio campbellii (strain ATCC BAA-1116).